We begin with the raw amino-acid sequence, 349 residues long: Glycosyltransferase 8 domain-containing protein 2 (349 aa).

Residues 1-6 (MAFLRK) lie on the Cytoplasmic side of the membrane. Residues 7–24 (VNQVLLLLLVLTLCGILY) form a helical; Signal-anchor for type II membrane protein membrane-spanning segment. Topologically, residues 25–349 (KKVHKGAVLK…AGIFKLHHNR (325 aa)) are lumenal. A glycan (N-linked (GlcNAc...) asparagine) is linked at N234.

This sequence belongs to the glycosyltransferase 8 family.

The protein localises to the membrane. The sequence is that of Glycosyltransferase 8 domain-containing protein 2 (Glt8d2) from Mus musculus (Mouse).